The chain runs to 661 residues: Phospholipid:diacylglycerol acyltransferase (661 aa).

Positions 1-71 (MGTLFRRNVQ…FDRKRDGNGR (71 aa)) are disordered. Residues 1-80 (MGTLFRRNVQ…RKRWRDSRRL (80 aa)) are Cytoplasmic-facing. Residues 34–48 (HIHHQQGLGHKRRRG) show a composition bias toward basic residues. 2 consecutive short sequence motifs (bipartite nuclear localization signal) follow at residues 43-50 (HKRRRGIS) and 64-71 (RKRDGNGR). Positions 54-70 (KRNERGKDFDRKRDGNG) are enriched in basic and acidic residues. Residues 81–101 (IFILGAFLGVLLPFSFGAYHV) traverse the membrane as a helical segment. Residues 102–661 (HNSDSDLFDN…QWVSQMPFPM (560 aa)) lie on the Lumenal side of the membrane. A substrate-binding site is contributed by Gln162. The short motif at 322–326 (GHSMG) is the GHSXG lipase motif element. Ser324 functions as the Acyl-ester intermediate in the catalytic mechanism. Met325 provides a ligand contact to substrate. Residues Asn453, Asn461, and Asn469 are each glycosylated (N-linked (GlcNAc...) asparagine). Asp567 (charge relay system) is an active-site residue. Residue Asn594 is glycosylated (N-linked (GlcNAc...) asparagine). His618 functions as the Charge relay system in the catalytic mechanism.

Belongs to the AB hydrolase superfamily. Lipase family.

The protein resides in the endoplasmic reticulum membrane. The protein localises to the nucleus inner membrane. The enzyme catalyses a glycerophospholipid + a 1,2-diacyl-sn-glycerol = a monoacylglycerophospholipid + a triacyl-sn-glycerol. It catalyses the reaction a 1-acyl-sn-glycerol + a 1,2-diacyl-sn-glycero-3-phosphocholine = a 1-acyl-sn-glycero-3-phosphocholine + a 1,2-diacyl-sn-glycerol. The catalysed reaction is 1,2-di-(9Z-octadecenoyl)-sn-glycero-3-phosphoethanolamine + 1,2-di-(9Z-octadecenoyl)-sn-glycerol = 1-(9Z-octadecenoyl)-sn-glycero-3-phosphoethanolamine + 1,2,3-tri-(9Z-octadecenoyl)-glycerol. It carries out the reaction 1,2-di-(9Z-octadecenoyl)-sn-glycerol + 1,2-di-(9Z-octadecenoyl)-sn-glycero-3-phosphocholine = 1,2,3-tri-(9Z-octadecenoyl)-glycerol + 1-(9Z-octadecenoyl)-sn-glycero-3-phosphocholine. The enzyme catalyses 1-(9Z-octadecenoyl)-sn-glycerol + 1,2-di-(9Z-octadecenoyl)-sn-glycero-3-phosphocholine = di-(9Z)-octadecenoylglycerol + 1-(9Z-octadecenoyl)-sn-glycero-3-phosphocholine. It catalyses the reaction 2-(9Z-octadecenoyl)-glycerol + 1,2-di-(9Z-octadecenoyl)-sn-glycero-3-phosphocholine = 1,2-di-(9Z-octadecenoyl)-glycerol + 1-(9Z-octadecenoyl)-sn-glycero-3-phosphocholine. The catalysed reaction is 1-(9Z-octadecenoyl)-2-hexadecanoyl-sn-glycero-3-phosphoethanolamine + 1,2-di-(9Z-octadecenoyl)-sn-glycerol = 1,2-di-(9Z)-octadecenoyl-3-hexadecanoyl-sn-glycerol + 1-(9Z-octadecenoyl)-sn-glycero-3-phosphoethanolamine. It carries out the reaction 1-(9Z-octadecenoyl)-2-octadecanoyl-sn-glycero-3-phosphoethanolamine + 1,2-di-(9Z-octadecenoyl)-sn-glycerol = 1,2-di-(9Z)-octadecenoyl-3-octadecanoyl-sn-glycerol + 1-(9Z-octadecenoyl)-sn-glycero-3-phosphoethanolamine. The enzyme catalyses 1-(9Z)-octadecenoyl-2-(9Z,12Z)-octadecadienoyl-sn-glycero-3-phosphoethanolamine + 1,2-di-(9Z-octadecenoyl)-sn-glycerol = 1,2-di-(9Z)-octadecenoyl-3-(9Z,12Z)-octadecadienoyl-sn-glycerol + 1-(9Z-octadecenoyl)-sn-glycero-3-phosphoethanolamine. In terms of biological role, catalyzes triacylglycerol (TAG) formation by an acyl-CoA independent pathway. The enzyme specifically transfers acyl groups from the sn-2 position of a phospholipid to diacylglycerol (DAG), thus forming an sn-1-lysophospholipid. The preferred acyl donors are phosphatidylethanolamine (PE) and phosphatidylcholine (PC). Also capable of using broad acyl donors such as phosphatidic acid (PA), phosphatidylserine (PS), phosphatidylglycerol (PG) and phosphatidylinositol (PI), as well as monogalactosyldiacylglycerol (MGDG), digalactosyldiacylglycerol (DGDG), and acyl-CoA, and it is more likely to use unsaturated acyl donors. As acyl acceptors, it prefers 1,2- over 1,3-diacylglycerol (DAG). Additionally, has esterification activity that can utilize methanol as acyl acceptor to generate fatty acid methyl esters (FAME). Can also utilize ceramide instead of DAG, acylating the ceramides by attaching a fatty acid to the hydroxy group on the first carbon atom of the long-chain base to produce 1-O-acylceramides. Involved in lipid particle synthesis from the endoplasmic reticulum, promoting localized TAG production at discrete ER subdomains. Relocates from the endoplasmic reticulum to a subdomain of the inner nuclear membrane upon nutrient starvation, where it provides a site of TAG synthesis, which is coupled with nuclear membrane remodeling. This Saccharomyces cerevisiae (strain ATCC 204508 / S288c) (Baker's yeast) protein is Phospholipid:diacylglycerol acyltransferase.